Here is a 191-residue protein sequence, read N- to C-terminus: Abscisic acid receptor PYR1 (191 aa).

Residues tyrosine 23 to glutamate 176 are START-like. Residue lysine 59 participates in abscisate binding. Position 78 is a phosphothreonine; by CARK1 (threonine 78). Positions serine 85–alanine 89 match the Gate loop motif. Abscisate-binding positions include alanine 89 to glutamate 94, arginine 116 to serine 122, and glutamate 141. The Latch loop motif lies at histidine 115 to leucine 117.

Belongs to the PYR/PYL/RCAR abscisic acid intracellular receptor family. As to quaternary structure, homodimer. Binds ABA on one subunit only. Interacts with HAB1, AHG3, ABI1 and ABI2 when complexed to ABA, and possibly with other PP2Cs. Binds to CARs protein in an ABA-independent manner, both at the plasma membrane and in the nucleus. Interacts directly with CAR1 and CAR4. Interacts with CARK1 in the cytosol. Interacts with AIP1 in an abscisic acid-dependent manner. Interacts with FREE1 (via N-terminus). Interacts with the E3 ubiquitin-protein ligase RSL1 at the plasma membrane. Post-translationally, ubiquitynated and degraded by the proteasome upon binding to the E3 ubiquitin-protein ligase RSL1 at the plasma membrane. In terms of processing, phosphorylated by CARK1 especially in response to abscisic acid (ABA); this phosphorylation promotes its stability and inhibitory ability to ABI1.

The protein resides in the cytoplasm. It localises to the cytosol. It is found in the nucleus. The protein localises to the cell membrane. Its subcellular location is the vacuole. Its function is as follows. Receptor for abscisic acid (ABA) required for ABA-mediated responses such as stomatal closure and germination inhibition. Inhibits the activity of group-A protein phosphatases type 2C (PP2Cs) when activated by ABA. Can be activated by both (-)-ABA and (+)-ABA. Promotes drought tolerance. The protein is Abscisic acid receptor PYR1 of Arabidopsis thaliana (Mouse-ear cress).